A 238-amino-acid chain; its full sequence is Phosphoribosylaminoimidazole-succinocarboxamide synthase (238 aa).

It belongs to the SAICAR synthetase family.

It catalyses the reaction 5-amino-1-(5-phospho-D-ribosyl)imidazole-4-carboxylate + L-aspartate + ATP = (2S)-2-[5-amino-1-(5-phospho-beta-D-ribosyl)imidazole-4-carboxamido]succinate + ADP + phosphate + 2 H(+). Its pathway is purine metabolism; IMP biosynthesis via de novo pathway; 5-amino-1-(5-phospho-D-ribosyl)imidazole-4-carboxamide from 5-amino-1-(5-phospho-D-ribosyl)imidazole-4-carboxylate: step 1/2. The polypeptide is Phosphoribosylaminoimidazole-succinocarboxamide synthase (Methanococcoides burtonii (strain DSM 6242 / NBRC 107633 / OCM 468 / ACE-M)).